Consider the following 654-residue polypeptide: Spindle assembly abnormal protein 6 homolog (654 aa).

One can recognise a PISA domain in the interval 39-91 (VHRKDLVIRLTDDTDPFFLYNLVISEEDFQSLKLQQGLLVDFLAFPQKFIDLL). Positions 175 to 471 (TRQLHITQET…QLLKNNEKLI (297 aa)) form a coiled coil. At S509 the chain carries Phosphoserine. Residues 568–589 (ASIDGQPGAAVNRPCSNDKENG) are disordered. Residue S612 is modified to Phosphoserine. The segment covering 634-644 (SKPTVLPSSSS) has biased composition (low complexity). Residues 634-654 (SKPTVLPSSSSAYFPGQLPSS) form a disordered region. S654 carries the phosphoserine modification.

As to quaternary structure, nine homodimers form a cartwheel structure with an internal diameter of 23 nm and radial spokes connecting to the microtubule triplets. Forms a complex with CPAP and STIL. Interacts with FBXW5. Interacts with NUP62 and TUBG1 at the centrosome. Interacts with CENATAC; the interaction increases with CENATAC acetylation. Interacts with FZR1; the interaction is regulated by CENATAC and leads to SASS6 proteasomal degradation. Ubiquitinated by the SCF(FBXW5) E3 ubiquitin-protein ligase complex during S phase, leading to its degradation and preventing centriole reduplication. Ubiquitinated by the anaphase promoting complex/cyclosome (APC/C) E3 ubiquitin-protein ligase complex, leading to its degradation and preventing centriole reduplication.

It is found in the cytoplasm. It localises to the cytoskeleton. The protein localises to the microtubule organizing center. The protein resides in the centrosome. Its subcellular location is the centriole. In terms of biological role, central scaffolding component of the centrioles ensuring their 9-fold symmetry. Required for centrosome biogenesis and duplication. Required both for mother-centriole-dependent centriole duplication and deuterosome-dependent centriole amplification in multiciliated cells. Not required for centriole formation in embryonic stem cells but necessary to maintain centriole architecture. Required for the recruitment of STIL to the procentriole and for STIL-mediated centriole amplification. The sequence is that of Spindle assembly abnormal protein 6 homolog from Mus musculus (Mouse).